We begin with the raw amino-acid sequence, 94 residues long: MTKSELIERLASQQPHLPAKAVEDAVKEMLEHMAATLADGERIEIRGFGSFSLHYRAPRIGRNPKTGEKVELEGKYVPHFKPGKELRDRANIYA.

The protein belongs to the bacterial histone-like protein family. In terms of assembly, heterodimer of an alpha and a beta chain.

Its function is as follows. This protein is one of the two subunits of integration host factor, a specific DNA-binding protein that functions in genetic recombination as well as in transcriptional and translational control. The polypeptide is Integration host factor subunit beta (Edwardsiella ictaluri (strain 93-146)).